The following is a 161-amino-acid chain: Nucleotide-binding protein Pnec_0318 (161 aa).

It belongs to the YajQ family.

Functionally, nucleotide-binding protein. This Polynucleobacter necessarius subsp. necessarius (strain STIR1) protein is Nucleotide-binding protein Pnec_0318.